The chain runs to 202 residues: Nucleoid occlusion factor SlmA (202 aa).

Residues 14 to 75 (KERQQQVLEV…ALIERIEQTL (62 aa)) enclose the HTH tetR-type domain. Positions 38–57 (TTERLAKAVGVSEGALYRYF) form a DNA-binding region, H-T-H motif.

The protein belongs to the nucleoid occlusion factor SlmA family. As to quaternary structure, homodimer. Interacts with FtsZ.

Its subcellular location is the cytoplasm. The protein resides in the nucleoid. Its function is as follows. Required for nucleoid occlusion (NO) phenomenon, which prevents Z-ring formation and cell division over the nucleoid. Acts as a DNA-associated cell division inhibitor that binds simultaneously chromosomal DNA and FtsZ, and disrupts the assembly of FtsZ polymers. SlmA-DNA-binding sequences (SBS) are dispersed on non-Ter regions of the chromosome, preventing FtsZ polymerization at these regions. In Actinobacillus pleuropneumoniae serotype 5b (strain L20), this protein is Nucleoid occlusion factor SlmA.